Here is a 353-residue protein sequence, read N- to C-terminus: Holliday junction branch migration complex subunit RuvB (353 aa).

Residues 4–190 (TDKLQAPRVI…FGIVARLEFY (187 aa)) are large ATPase domain (RuvB-L). ATP contacts are provided by residues leucine 29, arginine 30, glycine 71, lysine 74, threonine 75, threonine 76, 137–139 (EDF), arginine 180, tyrosine 190, and arginine 227. Threonine 75 serves as a coordination point for Mg(2+). The tract at residues 191-261 (TPHELAYIVG…VADAALLMLD (71 aa)) is small ATPAse domain (RuvB-S). The head domain (RuvB-H) stretch occupies residues 264–353 (HLGLDLMDRK…DESAELFSAP (90 aa)). Arginine 319 and arginine 324 together coordinate DNA.

It belongs to the RuvB family. Homohexamer. Forms an RuvA(8)-RuvB(12)-Holliday junction (HJ) complex. HJ DNA is sandwiched between 2 RuvA tetramers; dsDNA enters through RuvA and exits via RuvB. An RuvB hexamer assembles on each DNA strand where it exits the tetramer. Each RuvB hexamer is contacted by two RuvA subunits (via domain III) on 2 adjacent RuvB subunits; this complex drives branch migration. In the full resolvosome a probable DNA-RuvA(4)-RuvB(12)-RuvC(2) complex forms which resolves the HJ.

Its subcellular location is the cytoplasm. The catalysed reaction is ATP + H2O = ADP + phosphate + H(+). Functionally, the RuvA-RuvB-RuvC complex processes Holliday junction (HJ) DNA during genetic recombination and DNA repair, while the RuvA-RuvB complex plays an important role in the rescue of blocked DNA replication forks via replication fork reversal (RFR). RuvA specifically binds to HJ cruciform DNA, conferring on it an open structure. The RuvB hexamer acts as an ATP-dependent pump, pulling dsDNA into and through the RuvAB complex. RuvB forms 2 homohexamers on either side of HJ DNA bound by 1 or 2 RuvA tetramers; 4 subunits per hexamer contact DNA at a time. Coordinated motions by a converter formed by DNA-disengaged RuvB subunits stimulates ATP hydrolysis and nucleotide exchange. Immobilization of the converter enables RuvB to convert the ATP-contained energy into a lever motion, pulling 2 nucleotides of DNA out of the RuvA tetramer per ATP hydrolyzed, thus driving DNA branch migration. The RuvB motors rotate together with the DNA substrate, which together with the progressing nucleotide cycle form the mechanistic basis for DNA recombination by continuous HJ branch migration. Branch migration allows RuvC to scan DNA until it finds its consensus sequence, where it cleaves and resolves cruciform DNA. The polypeptide is Holliday junction branch migration complex subunit RuvB (Aromatoleum aromaticum (strain DSM 19018 / LMG 30748 / EbN1) (Azoarcus sp. (strain EbN1))).